Reading from the N-terminus, the 624-residue chain is Low affinity potassium transport system protein Kup (624 aa).

12 consecutive transmembrane segments (helical) span residues 9-29 (LPAI…TSPL), 49-69 (VFGF…IKYL), 103-123 (VIMG…TPAI), 137-157 (PQLD…LFMI), 165-185 (VGKL…GLGL), 213-233 (VSFI…ALYA), 247-267 (WFTV…ALLL), 276-296 (PFFL…AALA), 337-357 (IYIP…IVIV), 365-385 (LAAA…ILST), 398-418 (FVAL…TANL), and 421-441 (LLSG…VMTT).

Belongs to the HAK/KUP transporter (TC 2.A.72) family.

It localises to the cell inner membrane. The catalysed reaction is K(+)(in) + H(+)(in) = K(+)(out) + H(+)(out). Its function is as follows. Responsible for the low-affinity transport of potassium into the cell. Likely operates as a K(+):H(+) symporter. This is Low affinity potassium transport system protein Kup from Shigella dysenteriae serotype 1 (strain Sd197).